Consider the following 95-residue polypeptide: Large ribosomal subunit protein bL25 (95 aa).

Belongs to the bacterial ribosomal protein bL25 family. As to quaternary structure, part of the 50S ribosomal subunit; part of the 5S rRNA/L5/L18/L25 subcomplex. Contacts the 5S rRNA. Binds to the 5S rRNA independently of L5 and L18.

In terms of biological role, this is one of the proteins that binds to the 5S RNA in the ribosome where it forms part of the central protuberance. The protein is Large ribosomal subunit protein bL25 of Shewanella sp. (strain ANA-3).